Consider the following 493-residue polypeptide: Glutamate--tRNA ligase (493 aa).

The short motif at 9–19 (PSPTGFVHIGS) is the 'HIGH' region element. The 'KMSKS' region motif lies at 258–262 (KLSKR). ATP is bound at residue lysine 261.

Belongs to the class-I aminoacyl-tRNA synthetase family. Glutamate--tRNA ligase type 1 subfamily. In terms of assembly, monomer.

It localises to the cytoplasm. The enzyme catalyses tRNA(Glu) + L-glutamate + ATP = L-glutamyl-tRNA(Glu) + AMP + diphosphate. Its function is as follows. Catalyzes the attachment of glutamate to tRNA(Glu) in a two-step reaction: glutamate is first activated by ATP to form Glu-AMP and then transferred to the acceptor end of tRNA(Glu). The sequence is that of Glutamate--tRNA ligase from Clostridioides difficile (strain 630) (Peptoclostridium difficile).